Consider the following 84-residue polypeptide: Exodeoxyribonuclease 7 small subunit (84 aa).

The protein belongs to the XseB family. As to quaternary structure, heterooligomer composed of large and small subunits.

The protein localises to the cytoplasm. It catalyses the reaction Exonucleolytic cleavage in either 5'- to 3'- or 3'- to 5'-direction to yield nucleoside 5'-phosphates.. In terms of biological role, bidirectionally degrades single-stranded DNA into large acid-insoluble oligonucleotides, which are then degraded further into small acid-soluble oligonucleotides. In Haemophilus influenzae (strain ATCC 51907 / DSM 11121 / KW20 / Rd), this protein is Exodeoxyribonuclease 7 small subunit.